Reading from the N-terminus, the 430-residue chain is Glutamate-1-semialdehyde 2,1-aminomutase (430 aa).

Lys267 carries the N6-(pyridoxal phosphate)lysine modification.

Belongs to the class-III pyridoxal-phosphate-dependent aminotransferase family. HemL subfamily. As to quaternary structure, homodimer. Requires pyridoxal 5'-phosphate as cofactor.

The protein resides in the cytoplasm. It carries out the reaction (S)-4-amino-5-oxopentanoate = 5-aminolevulinate. It functions in the pathway porphyrin-containing compound metabolism; protoporphyrin-IX biosynthesis; 5-aminolevulinate from L-glutamyl-tRNA(Glu): step 2/2. The chain is Glutamate-1-semialdehyde 2,1-aminomutase from Lawsonia intracellularis (strain PHE/MN1-00).